Here is a 510-residue protein sequence, read N- to C-terminus: Probable cytosol aminopeptidase (510 aa).

Mn(2+) contacts are provided by Lys-272 and Asp-277. Lys-284 is a catalytic residue. Asp-296, Asp-355, and Glu-357 together coordinate Mn(2+). Residue Arg-359 is part of the active site.

The protein belongs to the peptidase M17 family. Mn(2+) is required as a cofactor.

It localises to the cytoplasm. The catalysed reaction is Release of an N-terminal amino acid, Xaa-|-Yaa-, in which Xaa is preferably Leu, but may be other amino acids including Pro although not Arg or Lys, and Yaa may be Pro. Amino acid amides and methyl esters are also readily hydrolyzed, but rates on arylamides are exceedingly low.. It catalyses the reaction Release of an N-terminal amino acid, preferentially leucine, but not glutamic or aspartic acids.. Functionally, presumably involved in the processing and regular turnover of intracellular proteins. Catalyzes the removal of unsubstituted N-terminal amino acids from various peptides. The polypeptide is Probable cytosol aminopeptidase (Synechococcus sp. (strain JA-3-3Ab) (Cyanobacteria bacterium Yellowstone A-Prime)).